The chain runs to 368 residues: Ribosomal RNA large subunit methyltransferase M (368 aa).

Residues Ser189, 222-225 (CPGG), Asp241, Asp261, and Asp278 contribute to the S-adenosyl-L-methionine site. Catalysis depends on Lys307, which acts as the Proton acceptor.

Belongs to the class I-like SAM-binding methyltransferase superfamily. RNA methyltransferase RlmE family. RlmM subfamily. In terms of assembly, monomer.

It is found in the cytoplasm. The enzyme catalyses cytidine(2498) in 23S rRNA + S-adenosyl-L-methionine = 2'-O-methylcytidine(2498) in 23S rRNA + S-adenosyl-L-homocysteine + H(+). Its function is as follows. Catalyzes the 2'-O-methylation at nucleotide C2498 in 23S rRNA. The protein is Ribosomal RNA large subunit methyltransferase M of Yersinia pestis bv. Antiqua (strain Angola).